The following is a 472-amino-acid chain: Argininosuccinate lyase (472 aa).

The protein belongs to the lyase 1 family. Argininosuccinate lyase subfamily.

The protein resides in the cytoplasm. It carries out the reaction 2-(N(omega)-L-arginino)succinate = fumarate + L-arginine. The protein operates within amino-acid biosynthesis; L-arginine biosynthesis; L-arginine from L-ornithine and carbamoyl phosphate: step 3/3. This is Argininosuccinate lyase from Synechococcus sp. (strain CC9605).